The sequence spans 359 residues: Src kinase-associated phosphoprotein 1 (359 aa).

The PH domain occupies 107–210 (NVIKQGYLEK…WVDQISFLLK (104 aa)). 3 positions are modified to phosphotyrosine: Y142, Y219, and Y232. Residues 219–237 (YEEDEEEEEKEETYDDIDG) are compositionally biased toward acidic residues. Residues 219–239 (YEEDEEEEEKEETYDDIDGFD) form a disordered region. Residues Y271 and Y295 each carry the phosphotyrosine; by FYN modification. Residues 290 to 295 (RKGVDY) form an interaction with FYB1 region. Residues 294–355 (DYASYYQGLW…PKEYLTTAFE (62 aa)) enclose the SH3 domain.

This sequence belongs to the SKAP family. In terms of assembly, homodimer. Interacts with FYN. Interacts with PTPRC. Interacts with GRB2 when phosphorylated on Tyr-271. Interacts with FYB1, which is required for SKAP2 protein stability. Part of a complex consisting of SKAP1, FYB1 and CLNK. Interacts with RASGRP1. Interacts with FYB2. Phosphorylated on tyrosines. Phosphorylation by FYN on Tyr-271 is required for GRB2 interaction. Phosphorylation by FYN on Tyr-295 abolishes interaction with FYB1. Tyr-232 is dephosphorylated by PTPRC. As to expression, highly expressed in thymocytes and peripheral blood lymphocytes. Also expressed in spleen cells and testis. Present in T-cells (at protein level).

The protein resides in the cytoplasm. The protein localises to the nucleus. Its subcellular location is the cell membrane. In terms of biological role, positively regulates T-cell receptor signaling by enhancing the MAP kinase pathway. Required for optimal conjugation between T-cells and antigen-presenting cells by promoting the clustering of integrin ITGAL on the surface of T-cells. May be involved in high affinity immunoglobulin epsilon receptor signaling in mast cells. The polypeptide is Src kinase-associated phosphoprotein 1 (SKAP1) (Homo sapiens (Human)).